Here is a 1163-residue protein sequence, read N- to C-terminus: MLERSLLLATLLSALCSANLFGNNSYVYYYQSAFRPSDGWHLHGGAYEVVNVSTESSNAGTTGCTAGAIYWSKNFSAASVAMTAPQNGMSWSTEQFCTAHCNFTDFVVFVTHCYKSGHGSCPLTGLIPQNHIRISAMKNSSLFYNLTVAVTKYPRFKSLQCVNNMTSVYLNGDLVFTSNETKDVSAAGVHFKAGGPITYKVMREVKALAYFVNGTAQDVILCDGSPTGLLACQYNTGNFSDGFYPFTNSSLVKEKFIVYRESSVNTTLELTNFTFSNVSNATPNTGGVQTIQLYQTITAQSGYYNLNFSFLSSFIYKASDYMYGSYHPSCKFRLETINNGLWFNSLSVSLGYGPIQGGCKQSVFANRATCCYAYSYNGPSLCKGVYRGELTKSFECGLLVFVTKTDGSRIQTRNEPFTLTQHNYNNITLDRCVEYNIYGRVGQGFITNVTNYAINYNYLADGGMAILDTSGAIDIFVVQGEYGLNYYKVNPCEDVNQQFVVSGGKLVGILTSRNETGSQPLENQFYIKIINGTRRSRRSITGNVTNCPYVTYGKFCIKPDGSISTIVPKELEHFVAPLLNVTENVLIPDSFNLTVTDEYIQTRMDKVQINCLQYVCGNSLECRKLFQQYGPVCDNILSVVNSVGQKEDMELLYFYSSTKPSGFNTPVLSNVSTGEFNISLLLTPPSSASGRSFIEDLLFTSVESVGLPTDDAYKKCTAGPLGFLKDLACAREYNGLLVLPPIITAEMQTLYTSSLVASMAFGGITSAGAIPFATQLQARINHLGITQSLLFKNQEKIAASFNKAIGHMQEGFRSTSLALQQIQDVVNKQSSILTETMASLNKNFGAISSVLQDIYQQLDSIQADAQVDRIITGRLSSLSVLASAKQAEYYRVSQQRELATQKINECVKSQSIRYSFCGNGRHVLTIPQNAPNGIVFIHFTYTPESFVNVTAIVGFCVNPANASQYAIVPANGRGIFIQVNGSYYITARDMYMPRDITAGDIVTLTSCQANYVSVNKTVITTFVDNDDFDFDDELSKWWNDTKHELPDFDEFNYTVPILDIGSEIDRIQGVIQGLNDSLIDLETLSILKTYIKWPWYVWLAIAFLTIIFILVLCWIFFMTGCCGCCCGCFGIIPLMSKCGKKSSYYTTFDNDVVYEQYRPKKSV.

Residues 1-18 (MLERSLLLATLLSALCSA) form the signal peptide. The Extracellular segment spans residues 19–1096 (NLFGNNSYVY…LKTYIKWPWY (1078 aa)). Asparagine 23, asparagine 51, asparagine 74, asparagine 102, asparagine 139, asparagine 145, asparagine 164, asparagine 179, asparagine 213, asparagine 238, asparagine 248, asparagine 265, asparagine 272, asparagine 277, asparagine 307, asparagine 426, asparagine 448, asparagine 514, asparagine 531, asparagine 543, asparagine 580, asparagine 592, asparagine 670, and asparagine 677 each carry an N-linked (GlcNAc...) asparagine; by host glycan. The interval 770–875 (IPFATQLQAR…QVDRIITGRL (106 aa)) is heptad repeat 1 (HR1). Residues 823–867 (QDVVNKQSSILTETMASLNKNFGAISSVLQDIYQQLDSIQADAQV) adopt a coiled-coil conformation. N-linked (GlcNAc...) asparagine; by host glycosylation is found at asparagine 948, asparagine 961, asparagine 980, asparagine 1015, asparagine 1039, asparagine 1052, and asparagine 1075. Residues 1025–1106 (NDDFDFDDEL…VWLAIAFLTI (82 aa)) are heptad repeat 2 (HR2). Positions 1056–1084 (PILDIGSEIDRIQGVIQGLNDSLIDLETL) form a coiled coil. The helical transmembrane segment at 1097–1117 (VWLAIAFLTIIFILVLCWIFF) threads the bilayer. The Cytoplasmic segment spans residues 1118–1163 (MTGCCGCCCGCFGIIPLMSKCGKKSSYYTTFDNDVVYEQYRPKKSV). The short motif at 1160–1163 (KKSV) is the Di-lysine motif element.

The protein belongs to the gammacoronaviruses spike protein family. In terms of assembly, homotrimer; each monomer consists of a S1 and a S2 subunit. The resulting peplomers protrude from the virus surface as spikes. In terms of processing, specific enzymatic cleavages in vivo yield mature proteins. The precursor is processed into S1 and S2 by host cell furin or furin-like protease to yield the mature S1 and S2 proteins. The cleavage site between S1 and S2 requires the optimal sequence [KR]-X-[KR]-R. Additionally, a second cleavage leads to the release of a fusion peptide after viral attachment to host cell receptor.

It is found in the virion membrane. The protein localises to the host endoplasmic reticulum-Golgi intermediate compartment membrane. Functionally, attaches the virion to the host cell membrane by interacting with sialic acids, initiating the infection. Mediates fusion of the virion and cellular membranes by acting as a class I viral fusion protein. Under the current model, the protein has at least 3 conformational states: pre-fusion native state, pre-hairpin intermediate state, and post-fusion hairpin state. During viral and target cell membrane fusion, the coiled coil regions (heptad repeats) assume a trimer-of-hairpins structure, positioning the fusion peptide in close proximity to the C-terminal region of the ectodomain. The formation of this structure appears to drive apposition and subsequent fusion of viral and target cell membranes. In terms of biological role, acts as a viral fusion peptide after S2 cleavage occurring upon virus endocytosis. This chain is Spike glycoprotein, found in Gallus gallus (Chicken).